Reading from the N-terminus, the 253-residue chain is Tryptophan synthase alpha chain (253 aa).

Active-site proton acceptor residues include Glu47 and Asp58.

The protein belongs to the TrpA family. In terms of assembly, tetramer of two alpha and two beta chains.

The enzyme catalyses (1S,2R)-1-C-(indol-3-yl)glycerol 3-phosphate + L-serine = D-glyceraldehyde 3-phosphate + L-tryptophan + H2O. Its pathway is amino-acid biosynthesis; L-tryptophan biosynthesis; L-tryptophan from chorismate: step 5/5. Functionally, the alpha subunit is responsible for the aldol cleavage of indoleglycerol phosphate to indole and glyceraldehyde 3-phosphate. The polypeptide is Tryptophan synthase alpha chain (Desulforapulum autotrophicum (strain ATCC 43914 / DSM 3382 / VKM B-1955 / HRM2) (Desulfobacterium autotrophicum)).